The primary structure comprises 408 residues: Peptidase T (408 aa).

Residue H78 coordinates Zn(2+). D80 is an active-site residue. Residue D141 participates in Zn(2+) binding. E175 (proton acceptor) is an active-site residue. Positions 176, 198, and 380 each coordinate Zn(2+).

This sequence belongs to the peptidase M20B family. Requires Zn(2+) as cofactor.

The protein localises to the cytoplasm. The enzyme catalyses Release of the N-terminal residue from a tripeptide.. In terms of biological role, cleaves the N-terminal amino acid of tripeptides. In Clostridium acetobutylicum (strain ATCC 824 / DSM 792 / JCM 1419 / IAM 19013 / LMG 5710 / NBRC 13948 / NRRL B-527 / VKM B-1787 / 2291 / W), this protein is Peptidase T.